Reading from the N-terminus, the 82-residue chain is Putative defensin-like protein 48 (82 aa).

A signal peptide spans 1-28; the sequence is MGIKTLIIFFHIFILAVLSSNNIILTSG. 4 disulfide bridges follow: Cys-39–Cys-80, Cys-43–Cys-67, Cys-53–Cys-78, and Cys-57–Cys-79.

The protein belongs to the DEFL family.

Its subcellular location is the secreted. In Arabidopsis thaliana (Mouse-ear cress), this protein is Putative defensin-like protein 48.